We begin with the raw amino-acid sequence, 202 residues long: Flagellar transcriptional regulator FlhC (202 aa).

Residues Cys137, Cys140, Cys157, and Cys160 each coordinate Zn(2+).

Belongs to the FlhC family. In terms of assembly, heterohexamer composed of two FlhC and four FlhD subunits. Each FlhC binds a FlhD dimer, forming a heterotrimer, and a hexamer assembles by dimerization of two heterotrimers. Requires Zn(2+) as cofactor.

The protein localises to the cytoplasm. In terms of biological role, functions in complex with FlhD as a master transcriptional regulator that regulates transcription of several flagellar and non-flagellar operons by binding to their promoter region. Activates expression of class 2 flagellar genes, including fliA, which is a flagellum-specific sigma factor that turns on the class 3 genes. Also regulates genes whose products function in a variety of physiological pathways. This is Flagellar transcriptional regulator FlhC from Variovorax paradoxus (strain S110).